The chain runs to 357 residues: DNA integrity scanning protein DisA (357 aa).

Residues 8-146 (VKSMINILQL…GNLRYTLKDI (139 aa)) enclose the DAC domain. Residues glycine 75, leucine 93, and 106–110 (MRHRT) contribute to the ATP site.

The protein belongs to the DisA family. In terms of assembly, homooctamer. The cofactor is Mg(2+).

The enzyme catalyses 2 ATP = 3',3'-c-di-AMP + 2 diphosphate. Participates in a DNA-damage check-point that is active prior to asymmetric division when DNA is damaged. DisA forms globular foci that rapidly scan along the chromosomes during sporulation, searching for lesions. When a lesion is present, DisA pauses at the lesion site. This triggers a cellular response that culminates in a temporary block in sporulation initiation. Functionally, also has diadenylate cyclase activity, catalyzing the condensation of 2 ATP molecules into cyclic di-AMP (c-di-AMP). c-di-AMP acts as a signaling molecule that couples DNA integrity with progression of sporulation. The rise in c-di-AMP level generated by DisA while scanning the chromosome, operates as a positive signal that advances sporulation; upon encountering a lesion, the DisA focus arrests at the damaged site and halts c-di-AMP synthesis. This chain is DNA integrity scanning protein DisA, found in Bacillus anthracis (strain CDC 684 / NRRL 3495).